The following is a 436-amino-acid chain: Histidinol dehydrogenase (436 aa).

Residues Tyr130, Gln191, and Asn214 each coordinate NAD(+). 3 residues coordinate substrate: Ser237, Gln259, and His262. Residues Gln259 and His262 each coordinate Zn(2+). Catalysis depends on proton acceptor residues Glu327 and His328. Substrate contacts are provided by His328, Asp361, Glu415, and His420. Asp361 contacts Zn(2+). His420 serves as a coordination point for Zn(2+).

Belongs to the histidinol dehydrogenase family. Zn(2+) serves as cofactor.

It catalyses the reaction L-histidinol + 2 NAD(+) + H2O = L-histidine + 2 NADH + 3 H(+). It participates in amino-acid biosynthesis; L-histidine biosynthesis; L-histidine from 5-phospho-alpha-D-ribose 1-diphosphate: step 9/9. Catalyzes the sequential NAD-dependent oxidations of L-histidinol to L-histidinaldehyde and then to L-histidine. In Geobacter metallireducens (strain ATCC 53774 / DSM 7210 / GS-15), this protein is Histidinol dehydrogenase.